A 1930-amino-acid polypeptide reads, in one-letter code: Ankyrin repeat domain-containing protein SAT10 (1930 aa).

ANK repeat units lie at residues 840–872, 878–908, 920–949, 959–989, 993–1023, 1073–1102, 1106–1135, 1144–1174, 1178–1205, 1206–1235, 1239–1268, 1272–1301, 1304–1333, 1339–1368, 1400–1429, 1514–1543, 1548–1577, 1615–1644, 1651–1680, and 1696–1724; these read FRHTPLGVATAYGDADVIDLLINHDISWWDLEE, GTWNALHHAALGGQRNIMCKLLLQQRKGVLN, SGNTPLILAASRGFHKIVALLLEDGSMRGY, QRSSALLAAARYGFSQTLEMLLTYEGIDYSK, NGASILHLALVNDREAAALQILAHKDIFSNE, SGLTSLTIAIWRNLKSIVEILIAMDADANG, EFEAPLVAAAEVGSFELFTMFTKIGATKTE, GRTRPLHAACAMGHLEVVRELLKDSVTQLSH, NQRTPLCAAISRDQNHVISVLLDRETET, GLQEGLWEAARSGKAHILDQLLRRGAEINA, YGNTALQWASYYNKPRCVERLLLGGARLDL, DNVNALGDAARSGSAEPLKLLVDVGVDVNA, GGDTALCRAIWAEEVECVSVLLQGGAKFIL, RFENLLTFAVQVSSPEILRLLLKAPEERDL, SGWTILHLAAVHGTLAGLTKVLDHATGRAA, QNMLASAWMDTERSLKLLGILLEAGVSLTP, RHGTALHTAALFSPKPLVEKVIETSRMLAD, MGRNAVHLAAAAGARSVLEKIFEVEENEDL, DGWTPFHWACRGEDDDCARFLIEKARKIFD, and KTWTPLDVARFHQRREVELLLSLGMTTSD.

Its pathway is mycotoxin biosynthesis. Functionally, ankyrin repeat domain-containing protein; part of the satratoxin SC1 cluster involved in the biosynthesis of satratoxins, trichothecene mycotoxins that are associated with human food poisonings. Satratoxins are suggested to be made by products of multiple gene clusters (SC1, SC2 and SC3) that encode 21 proteins in all, including polyketide synthases, acetyltransferases, and other enzymes expected to modify the trichothecene skeleton. SC1 encodes 10 proteins, SAT1 to SAT10. The largest are SAT8, which encodes a putative polyketide synthase (PKS) with a conventional non-reducing architecture, and SAT10, a putative protein containing four ankyrin repeats and thus may be involved in protein scaffolding. The putative short-chain reductase SAT3 may assist the PKS in some capacity. SAT6 contains a secretory lipase domain and acts probably as a trichothecene esterase. SAT5 encodes a putative acetyltransferase, and so, with SAT6, may affect endogenous protection from toxicity. The probable transcription factor SAT9 may regulate the expression of the SC1 cluster. SC2 encodes proteins SAT11 to SAT16, the largest of which encodes the putative reducing PKS SAT13. SAT11 is a cytochrome P450 monooxygenase, while SAT14 and SAT16 are probable acetyltransferases. The SC2 cluster may be regulated by the transcription factor SAT15. SC3 is a small cluster that encodes 5 proteins, SAT17 to SAT21. SAT21 is a putative MFS-type transporter which may have a role in exporting secondary metabolites. The four other proteins putatively encoded in SC3 include the taurine hydroxylase-like protein SAT17, the O-methyltransferase SAT18, the acetyltransferase SAT19, and the Cys6-type zinc finger SAT20, the latter being probably involved in regulation of SC3 expression. This is Ankyrin repeat domain-containing protein SAT10 from Stachybotrys chartarum (strain CBS 109288 / IBT 7711) (Toxic black mold).